A 148-amino-acid polypeptide reads, in one-letter code: Nucleoside diphosphate kinase (148 aa).

Residues Lys-9, Phe-57, Arg-85, Thr-91, Arg-102, and Asn-112 each coordinate ATP. His-115 acts as the Pros-phosphohistidine intermediate in catalysis.

The protein belongs to the NDK family. It depends on Mg(2+) as a cofactor.

The enzyme catalyses a 2'-deoxyribonucleoside 5'-diphosphate + ATP = a 2'-deoxyribonucleoside 5'-triphosphate + ADP. The catalysed reaction is a ribonucleoside 5'-diphosphate + ATP = a ribonucleoside 5'-triphosphate + ADP. Its function is as follows. Major role in the synthesis of nucleoside triphosphates other than ATP. The ATP gamma phosphate is transferred to the NDP beta phosphate via a ping-pong mechanism, using a phosphorylated active-site intermediate. This is Nucleoside diphosphate kinase from Helianthus annuus (Common sunflower).